The sequence spans 107 residues: Nucleoid-associated protein Msil_0275 (107 aa).

It belongs to the YbaB/EbfC family. Homodimer.

The protein localises to the cytoplasm. The protein resides in the nucleoid. Its function is as follows. Binds to DNA and alters its conformation. May be involved in regulation of gene expression, nucleoid organization and DNA protection. This is Nucleoid-associated protein Msil_0275 from Methylocella silvestris (strain DSM 15510 / CIP 108128 / LMG 27833 / NCIMB 13906 / BL2).